The primary structure comprises 958 residues: Coiled-coil domain-containing protein 187 (958 aa).

Residues 116 to 132 show a composition bias toward low complexity; sequence SSVSSGRMSGSSGGHES. Disordered regions lie at residues 116–160, 345–447, 470–492, and 510–602; these read SSVS…SDPR, ELTR…PRFF, QDISVQKSGSSLKKPSPFSQRPW, and EPSP…KAQA. Composition is skewed to polar residues over residues 374-398 and 470-491; these read LQSTQDMQGSSKTAWTVTEGKNSSL and QDISVQKSGSSLKKPSPFSQRP. A compositionally biased stretch (low complexity) spans 536–545; the sequence is SSPSSKGKSA. A coiled-coil region spans residues 718–743; it reads KQARLQALETMAEALRQRVDILTTKL. The disordered stretch occupies residues 916 to 958; that stretch reads EVKKEGLVTPWTTRSCGKGEPADRPWAGWSGGQGGLPWASSTA.

This Mus musculus (Mouse) protein is Coiled-coil domain-containing protein 187.